Here is a 1509-residue protein sequence, read N- to C-terminus: DNA polymerase alpha catalytic subunit (1509 aa).

The tract at residues 1–162 is disordered; sequence MNRPKREKKS…KKTKEKKNEI (162 aa). Composition is skewed to basic and acidic residues over residues 21–35 and 42–79; these read EQIK…RTDQ and ERKR…RETS. Residues 27–67 adopt a coiled-coil conformation; sequence RDGEKRTDQLQEEDDERKRLEQLKEQETEFDKEERKRKNRD. A compositionally biased stretch (acidic residues) spans 80–123; that stretch reads DNEDEDEDEDDDGDNSDDDYSLDEDDEDGGGDGENNDSDQEEAI. Over residues 127-137 the composition is skewed to basic residues; sequence RKKKRQVKKKS. Residues 138 to 147 show a composition bias toward basic and acidic residues; that stretch reads KKDENGEPKV. The span at 148–157 shows a compositional bias: basic residues; the sequence is KTPRVKKTKE. Coiled-coil stretches lie at residues 234-263 and 958-989; these read APDS…LLNK and LHGL…IQQQ. Residues cysteine 1328, cysteine 1331, cysteine 1355, cysteine 1358, cysteine 1389, cysteine 1392, cysteine 1406, and cysteine 1411 each contribute to the Zn(2+) site. A CysA-type zinc finger spans residues 1328-1358; the sequence is CPYCGQNNEFTGIVKIDSEGKSESGFDCNQC. Positions 1389 to 1411 match the CysB motif motif; sequence CTECEKVSKNYKETSYRCARPQC.

The protein belongs to the DNA polymerase type-B family.

The protein localises to the nucleus. The catalysed reaction is DNA(n) + a 2'-deoxyribonucleoside 5'-triphosphate = DNA(n+1) + diphosphate. In terms of biological role, polymerase alpha in a complex with DNA primase is a replicative polymerase. This chain is DNA polymerase alpha catalytic subunit (pola1), found in Dictyostelium discoideum (Social amoeba).